The chain runs to 237 residues: Protein XpsM (237 aa).

The disordered stretch occupies residues 1–21; sequence MPAATWTASPSPPNWPVPMPR. Over residues 10 to 21 the composition is skewed to pro residues; that stretch reads PSPPNWPVPMPR.

In Xanthomonas campestris pv. campestris (strain ATCC 33913 / DSM 3586 / NCPPB 528 / LMG 568 / P 25), this protein is Protein XpsM (xpsM).